The sequence spans 349 residues: Divinyl chlorophyll a/b light-harvesting protein PcbB (349 aa).

Transmembrane regions (helical) follow at residues 27 to 47, 57 to 77, 91 to 113, 201 to 221, 241 to 261, and 306 to 326; these read FIAA…AATL, LPMG…GIGF, IAIL…SVYF, VMGG…FHIA, AILS…AFWA, and LVNV…WHAL.

The protein belongs to the PsbB/PsbC family. IsiA/Pcb subfamily. In terms of assembly, the antenna complex consists of divinyl chlorophylls (a and b) and divinyl chlorophyll a/b binding proteins and binds more divinyl chlorophyll b than does the antenna complex from high-light-adapted Prochlorococcus. Divinyl chlorophyll a is required as a cofactor. It depends on divinyl chlorophyll b as a cofactor.

The protein localises to the cellular thylakoid membrane. Its function is as follows. The antenna complex functions as a light receptor, it captures and delivers excitation energy to photosystems II and I. The Prochlorales pcb genes are not related to higher plant LHCs. This Prochlorococcus marinus (strain SARG / CCMP1375 / SS120) protein is Divinyl chlorophyll a/b light-harvesting protein PcbB (pcbB).